The chain runs to 343 residues: Glycerol-3-phosphate dehydrogenase [NAD(P)+] (343 aa).

Positions 15, 16, 36, and 110 each coordinate NADPH. 2 residues coordinate sn-glycerol 3-phosphate: K110 and G138. A142 is an NADPH binding site. 5 residues coordinate sn-glycerol 3-phosphate: K193, D246, S256, R257, and N258. K193 (proton acceptor) is an active-site residue. Residue R257 coordinates NADPH. Residue E283 participates in NADPH binding.

It belongs to the NAD-dependent glycerol-3-phosphate dehydrogenase family.

It localises to the cytoplasm. The enzyme catalyses sn-glycerol 3-phosphate + NAD(+) = dihydroxyacetone phosphate + NADH + H(+). It carries out the reaction sn-glycerol 3-phosphate + NADP(+) = dihydroxyacetone phosphate + NADPH + H(+). It participates in membrane lipid metabolism; glycerophospholipid metabolism. Its function is as follows. Catalyzes the reduction of the glycolytic intermediate dihydroxyacetone phosphate (DHAP) to sn-glycerol 3-phosphate (G3P), the key precursor for phospholipid synthesis. The chain is Glycerol-3-phosphate dehydrogenase [NAD(P)+] from Alcanivorax borkumensis (strain ATCC 700651 / DSM 11573 / NCIMB 13689 / SK2).